We begin with the raw amino-acid sequence, 131 residues long: UPF0102 protein YraN (131 aa).

The protein belongs to the UPF0102 family.

This Salmonella typhimurium (strain LT2 / SGSC1412 / ATCC 700720) protein is UPF0102 protein YraN.